Here is a 1096-residue protein sequence, read N- to C-terminus: MDSIELKQLVPENDSEPGTPRQLLFQHYDISNEETIGIKPFKSIPAKVYILRVTEILTLGLLHLILTWLPEFRLKWIEAPCSNEDVEFVAISDPSGTSSIEKVSSICLKNDIQTSSFVLPSGKTRYFEYKKLRFYLEPLNLQWVLMPLETSAYSLVTSTPAYIQNGLDTFTIAKLRQVYGSNSLVSTKKSIVTILLNEVLHPFYLFQAVSVLIWLCDSFVFYSCCIVFISSYSIFLSVKESKESENRIHSIIGAPQPVTVIRNQVKQTVLADDLVIGDLLYFSNLDLKTCPVDGILFSSSCLLDESMVTGESVPARKFPLEDNSLDSWMIASCNIFSPHLIHAGTKFLKIDSTPSTPCLISVVRTGFRSNKGQLIRNLLYPNLRPSQLYLDSMSFLKTMAILSFVSIVFIAIYLNLYNASFGHVVLRSLDVLTILVPPALPATLSVGIANSIARLSRALIYTTSPESIHNAGCLSTFVFDKTGTLTENSVQLSCVYVKSGSNGLLKQVDADSLSLDSTKLNAHAYRVATCSQSLELVGNELVGDPLEVTLFTQFNGTFCATIRASNTPHPPLFSVSNSFDGPSQIFSIYKALEFDPVLRRMSVICSTSTERSLMLFTKGAPESILAISSQQSIPSNVQEVIHTLSSKGFRIIAFASKNLITPLQELIHLSRSTLESNVTFQGLFVLESPLRESSKDVISSLLRSKMEVSICSGDSLFTSVFVAKHCGALDSCNFIYTAELADSGDDCPQIHFEKIDLQTQNFQPIPDGFSLKDVILEKDSSLCMDGKLLQRLLTMLSFNEIKILLSKLRVLARMSPFDKATYVELCQKYGCKVGFCGDGANDCIALKQADVGVSLSDSEACAAASFVSKKKSIKDVFNVLLEGRCSLILSHRCFQYMVLCAIVQFSGVFFLYLKNYNFNDNQFLFMDLLIIFPLSAAMSYFDPAQNLTSNRPNSTLFGKGRVKDLGIQSVLIWLSHGLLTLILHELNWVELPEWQLEKSNTKNVLVTSIFLLSSLQYLGICIGINQSSEFLSPIWKKKTYVCLCTTIGLCNIYLCFANENHIISRCLQITRLPTLYRFIILFMGVISCCLTSILNM.

The Cytoplasmic portion of the chain corresponds to 1–19; the sequence is MDSIELKQLVPENDSEPGT. The helical transmembrane segment at 20–41 threads the bilayer; it reads PRQLLFQHYDISNEETIGIKPF. Residues 42 to 47 are Lumenal-facing; the sequence is KSIPAK. A helical membrane pass occupies residues 48-70; the sequence is VYILRVTEILTLGLLHLILTWLP. Over 71–193 the chain is Cytoplasmic; it reads EFRLKWIEAP…LVSTKKSIVT (123 aa). A helical membrane pass occupies residues 194-216; it reads ILLNEVLHPFYLFQAVSVLIWLC. At 217–220 the chain is on the lumenal side; it reads DSFV. A helical transmembrane segment spans residues 221–238; the sequence is FYSCCIVFISSYSIFLSV. The Cytoplasmic portion of the chain corresponds to 239-391; that stretch reads KESKESENRI…NLRPSQLYLD (153 aa). Residues 392–412 form a helical membrane-spanning segment; sequence SMSFLKTMAILSFVSIVFIAI. Over 413–425 the chain is Lumenal; it reads YLNLYNASFGHVV. A helical membrane pass occupies residues 426–447; it reads LRSLDVLTILVPPALPATLSVG. The Cytoplasmic segment spans residues 448–895; that stretch reads IANSIARLSR…SLILSHRCFQ (448 aa). The active-site 4-aspartylphosphate intermediate is D480. 2 residues coordinate Mg(2+): D838 and D842. Residues 896–915 traverse the membrane as a helical segment; the sequence is YMVLCAIVQFSGVFFLYLKN. Residues 916–922 are Lumenal-facing; the sequence is YNFNDNQ. A helical transmembrane segment spans residues 923–940; it reads FLFMDLLIIFPLSAAMSY. Topologically, residues 941-958 are cytoplasmic; sequence FDPAQNLTSNRPNSTLFG. Residues 959–982 traverse the membrane as a helical segment; that stretch reads KGRVKDLGIQSVLIWLSHGLLTLI. At 983–1003 the chain is on the lumenal side; that stretch reads LHELNWVELPEWQLEKSNTKN. The chain crosses the membrane as a helical span at residues 1004-1026; it reads VLVTSIFLLSSLQYLGICIGINQ. Residues 1027-1040 lie on the Cytoplasmic side of the membrane; the sequence is SSEFLSPIWKKKTY. The chain crosses the membrane as a helical span at residues 1041 to 1060; sequence VCLCTTIGLCNIYLCFANEN. The Lumenal portion of the chain corresponds to 1061 to 1075; it reads HIISRCLQITRLPTL. A helical transmembrane segment spans residues 1076–1096; the sequence is YRFIILFMGVISCCLTSILNM.

It belongs to the cation transport ATPase (P-type) (TC 3.A.3) family. Type V subfamily.

It localises to the endoplasmic reticulum membrane. The protein resides in the golgi apparatus membrane. It carries out the reaction ATP + H2O = ADP + phosphate + H(+). Its function is as follows. Plays a role in regulating calcium and manganese homeostasis responsible for cell cycle progression. The sequence is that of Cation-transporting ATPase 5 (cta5) from Schizosaccharomyces pombe (strain 972 / ATCC 24843) (Fission yeast).